The following is a 169-amino-acid chain: MLNRLESLTQRVGGSNELIDQWLHARKELLVSYCTVIGIKPQKEKHTPLNAKTLENFCHNLVDYLSSGHFHIYDRIIKEVEGASSPKMALTAKIHPALKNNTQTIMAFHDRYTNIEIDDDSCTEYQQALSDIGEALDARFKLEDQLIQWAAESWQAAQLADADKKSQVN.

It belongs to the Rsd/AlgQ family. Interacts with RpoD.

The protein localises to the cytoplasm. Binds RpoD and negatively regulates RpoD-mediated transcription activation by preventing the interaction between the primary sigma factor RpoD with the catalytic core of the RNA polymerase and with promoter DNA. May be involved in replacement of the RNA polymerase sigma subunit from RpoD to RpoS during the transition from exponential growth to the stationary phase. The protein is Regulator of sigma D of Yersinia pseudotuberculosis serotype O:1b (strain IP 31758).